The sequence spans 498 residues: Glycerol kinase (498 aa).

Thr11 provides a ligand contact to ADP. ATP contacts are provided by Thr11, Ser12, and Ser13. Thr11 contacts sn-glycerol 3-phosphate. Arg15 contributes to the ADP binding site. The sn-glycerol 3-phosphate site is built by Arg81, Glu82, Tyr133, and Asp242. Glycerol-binding residues include Arg81, Glu82, Tyr133, Asp242, and Gln243. Residues Thr264 and Gly307 each contribute to the ADP site. ATP contacts are provided by Thr264, Gly307, Gln311, and Gly412. Residues Gly412 and Asn416 each coordinate ADP.

Belongs to the FGGY kinase family.

It catalyses the reaction glycerol + ATP = sn-glycerol 3-phosphate + ADP + H(+). The protein operates within polyol metabolism; glycerol degradation via glycerol kinase pathway; sn-glycerol 3-phosphate from glycerol: step 1/1. Its activity is regulated as follows. Inhibited by fructose 1,6-bisphosphate (FBP). Its function is as follows. Key enzyme in the regulation of glycerol uptake and metabolism. Catalyzes the phosphorylation of glycerol to yield sn-glycerol 3-phosphate. This is Glycerol kinase from Acidovorax ebreus (strain TPSY) (Diaphorobacter sp. (strain TPSY)).